A 96-amino-acid chain; its full sequence is MKTFVICLILVVAVSAAPDHHDGHLGGHQTGHQGGQQGGHLGGQQGGHLGGHQGGQPGGHLGGHQGGIGGTGGQQHGQHGPGTGAGHQGGYKTHGH.

Positions 1-18 (MKTFVICLILVVAVSAAP) are cleaved as a signal peptide. Positions 19–96 (DHHDGHLGGH…HQGGYKTHGH (78 aa)) are disordered. 12 repeat units span residues 23–26 (GHLG), 31–34 (GHQG), 35–38 (GQQG), 39–42 (GHLG), 43–46 (GQQG), 47–50 (GHLG), 51–54 (GHQG), 59–62 (GHLG), 63–66 (GHQG), 67–70 (GIGG), 77–80 (GQHG), and 86–89 (GHQG). The 12 X 4 AA repeats of G-X-X-G stretch occupies residues 23–89 (GHLGGHQTGH…GPGTGAGHQG (67 aa)). The segment covering 26–89 (GGHQTGHQGG…GPGTGAGHQG (64 aa)) has biased composition (gly residues).

The protein to H.diomphalia holotricin 3.

It is found in the secreted. Its function is as follows. Antifungal heat stable protein produced in response to injury. It is active against C.albicans. No antibacterial activity against Gram-positive and Gram-negative bacteria. The chain is Tenecin-3 from Tenebrio molitor (Yellow mealworm beetle).